We begin with the raw amino-acid sequence, 180 residues long: ATP synthase subunit delta (180 aa).

The protein belongs to the ATPase delta chain family. In terms of assembly, F-type ATPases have 2 components, F(1) - the catalytic core - and F(0) - the membrane proton channel. F(1) has five subunits: alpha(3), beta(3), gamma(1), delta(1), epsilon(1). F(0) has three main subunits: a(1), b(2) and c(10-14). The alpha and beta chains form an alternating ring which encloses part of the gamma chain. F(1) is attached to F(0) by a central stalk formed by the gamma and epsilon chains, while a peripheral stalk is formed by the delta and b chains.

Its subcellular location is the cell membrane. In terms of biological role, f(1)F(0) ATP synthase produces ATP from ADP in the presence of a proton or sodium gradient. F-type ATPases consist of two structural domains, F(1) containing the extramembraneous catalytic core and F(0) containing the membrane proton channel, linked together by a central stalk and a peripheral stalk. During catalysis, ATP synthesis in the catalytic domain of F(1) is coupled via a rotary mechanism of the central stalk subunits to proton translocation. Its function is as follows. This protein is part of the stalk that links CF(0) to CF(1). It either transmits conformational changes from CF(0) to CF(1) or is implicated in proton conduction. The sequence is that of ATP synthase subunit delta from Leuconostoc mesenteroides subsp. mesenteroides (strain ATCC 8293 / DSM 20343 / BCRC 11652 / CCM 1803 / JCM 6124 / NCDO 523 / NBRC 100496 / NCIMB 8023 / NCTC 12954 / NRRL B-1118 / 37Y).